The chain runs to 288 residues: Glandicoline B O-methyltransferase roqN (288 aa).

S-adenosyl-L-methionine contacts are provided by residues T57, D82, and 109–110; that span reads DA.

Belongs to the class I-like SAM-binding methyltransferase superfamily.

It catalyses the reaction glandicoline B + S-adenosyl-L-methionine = meleagrin + S-adenosyl-L-homocysteine + H(+). It participates in alkaloid biosynthesis. Glandicoline B O-methyltransferase; part of the gene cluster that mediates the biosynthesis of the mycotoxin meleagrin. The first stage is catalyzed by the dipeptide synthase roqA which condenses histidine and tryptophan to produce histidyltryptophanyldiketopiperazine (HTD). HTD is then converted to roquefortine C through two possible pathways. In the first pathway, prenyltransferase roqD transforms HTD to the intermediate roquefortine D, which is in turn converted to roquefortine C by the cytochrome P450 monooxygenase roqR. In the second pathway, HTD is first converted to the intermediate dehydrohistidyltryptophanyldi-ketopiperazine (DHTD) by roqR which is then prenylated by roqD to form roquefortine C. Roquefortine C can be further transformed to meleagrin via three more reactions including oxydation to glandicolin A by roqM, which is further reduced to glandicoline B by roqO. Finally, glandicoline B is converted to meleagrin by the glandicoline B O-methyltransferase roqN. More studies identified further branching and additional metabolites produced by the roquefortine/meleagrin cluster, including roquefortine F, roquefortine L, roquefortine M, roquefortine N and neoxaline. The polypeptide is Glandicoline B O-methyltransferase roqN (Penicillium rubens (strain ATCC 28089 / DSM 1075 / NRRL 1951 / Wisconsin 54-1255) (Penicillium chrysogenum)).